The primary structure comprises 172 residues: Adenine phosphoribosyltransferase (172 aa).

The protein belongs to the purine/pyrimidine phosphoribosyltransferase family. In terms of assembly, homodimer.

Its subcellular location is the cytoplasm. The catalysed reaction is AMP + diphosphate = 5-phospho-alpha-D-ribose 1-diphosphate + adenine. It functions in the pathway purine metabolism; AMP biosynthesis via salvage pathway; AMP from adenine: step 1/1. Functionally, catalyzes a salvage reaction resulting in the formation of AMP, that is energically less costly than de novo synthesis. This chain is Adenine phosphoribosyltransferase, found in Streptococcus thermophilus (strain ATCC BAA-250 / LMG 18311).